Consider the following 128-residue polypeptide: Nascent polypeptide-associated complex protein (128 aa).

In terms of domain architecture, NAC-A/B spans 8-75 (PRMLKKMQKM…PKKIKKEKVE (68 aa)).

The protein belongs to the NAC-alpha family. Homodimer. Interacts with the ribosome. Binds ribosomal RNA.

Functionally, contacts the emerging nascent chain on the ribosome. In Methanocaldococcus jannaschii (strain ATCC 43067 / DSM 2661 / JAL-1 / JCM 10045 / NBRC 100440) (Methanococcus jannaschii), this protein is Nascent polypeptide-associated complex protein.